A 127-amino-acid chain; its full sequence is Protein ApaG (127 aa).

Positions 3-127 (KDKRYAFSVK…FQLNMPRVLH (125 aa)) constitute an ApaG domain.

The protein is Protein ApaG of Methylobacillus flagellatus (strain ATCC 51484 / DSM 6875 / VKM B-1610 / KT).